The primary structure comprises 30 residues: Cyclotide hyen-E (30 aa).

Positions 1 to 30 (GVPCGESCVYIPCFTGIINCSCRDKVCYNN) form a cross-link, cyclopeptide (Gly-Asn). Intrachain disulfides connect C4–C20, C8–C22, and C13–C27.

This is a cyclic peptide. In terms of tissue distribution, detected in stems (at protein level).

In terms of biological role, probably participates in a plant defense mechanism. Has cytotoxic activity against HUVEC cells (LC(50)= 2.17 uM) and various cancer cells including HeLa (LC(50)= 3.05 uM), MCF-7 and K562. Displays very weak hemolytic activity. Binds to and induces leakage in phospholipd membranes, particularly ones containing 1-palmitoyl-2-oleophosphatidylethanolamine (POPE). The sequence is that of Cyclotide hyen-E from Pigea enneasperma (Spade flower).